The primary structure comprises 53 residues: U13-myrmicitoxin-Tb1a (53 aa).

The first 23 residues, 1 to 23 (MKLIYIFSLVAVIAVTMIPGIMG), serve as a signal peptide directing secretion. A propeptide spanning residues 24–29 (EAEAEG) is cleaved from the precursor. Residue K52 is modified to Lysine amide.

Expressed by the venom gland.

The protein localises to the secreted. In vivo, this neurotoxin paralyzes about 70% of blowflies (L.caesar) one hour after intrathoracic injection, when tested at high doses (45 nmol/g). The sequence is that of U13-myrmicitoxin-Tb1a from Tetramorium bicarinatum (Tramp ant).